The sequence spans 423 residues: MDNHNSSHQLYKKAMALVLAGGRGSRLYNLTDTRAKPAVYFGGKFRIIDFALSNCLNSGIRRIGVVTQYKSHSLLRHLQRGWGFLRGELNEFIDLLPAQQRVDEEHWYRGTADAVYQNIDILRSYGPEYVIVLAGDHIYKMDYSIMLRDHAQSGYKCTVGCVEIAKGEAYAFGIMGIDENRKITSFIEKPKKNAPTIPGTTDRCYASMGIYIFNSDYLYDLLEEDITNKESSHDFGKDIIPRVVSENQALAHPFSMSCVPRGEGIEPYWRDVGTIDAFWEANLDLAANMPELNIYDKDWPVWTAQEQLPPAKFVPDRNGNHGVITNTLASGGCIVLGSEISKSLMFSKVRVLAGCKIDQCVIMPEVVVGENCRLKKVVIDKGCDIPAGMVIGEDPIEDAKNFYRTDKGVVLVTKKMIDELKEK.

Alpha-D-glucose 1-phosphate is bound by residues tyrosine 108, glycine 173, 188 to 189, and serine 207; that span reads EK.

This sequence belongs to the bacterial/plant glucose-1-phosphate adenylyltransferase family. As to quaternary structure, homotetramer.

It catalyses the reaction alpha-D-glucose 1-phosphate + ATP + H(+) = ADP-alpha-D-glucose + diphosphate. It participates in glycan biosynthesis; glycogen biosynthesis. Functionally, involved in the biosynthesis of ADP-glucose, a building block required for the elongation reactions to produce glycogen. Catalyzes the reaction between ATP and alpha-D-glucose 1-phosphate (G1P) to produce pyrophosphate and ADP-Glc. The chain is Glucose-1-phosphate adenylyltransferase from Francisella tularensis subsp. mediasiatica (strain FSC147).